The following is a 478-amino-acid chain: Subtilisin-like protease 3 (478 aa).

A signal peptide spans 1-17 (MKFSTILPILWANCCLC). One can recognise an Inhibitor I9 domain in the interval 70 to 167 (RYVIVFNEDI…FVEQETTVKI (98 aa)). Residues 177–478 (PWGLHRVSHR…GGGKKLDGFW (302 aa)) enclose the Peptidase S8 domain. Catalysis depends on charge relay system residues aspartate 213, histidine 245, and serine 407.

The protein belongs to the peptidase S8 family.

Its function is as follows. Serine protease with unknown substrate. This Saccharomyces cerevisiae (strain ATCC 204508 / S288c) (Baker's yeast) protein is Subtilisin-like protease 3 (YSP3).